A 350-amino-acid chain; its full sequence is Biotin synthase (350 aa).

In terms of domain architecture, Radical SAM core spans 38-257; the sequence is NKVQVSTLLS…AVARIIMPMS (220 aa). [4Fe-4S] cluster-binding residues include C53, C57, and C60. Positions 97, 128, 188, and 260 each coordinate [2Fe-2S] cluster.

Belongs to the radical SAM superfamily. Biotin synthase family. In terms of assembly, homodimer. Requires [4Fe-4S] cluster as cofactor. [2Fe-2S] cluster serves as cofactor.

The catalysed reaction is (4R,5S)-dethiobiotin + (sulfur carrier)-SH + 2 reduced [2Fe-2S]-[ferredoxin] + 2 S-adenosyl-L-methionine = (sulfur carrier)-H + biotin + 2 5'-deoxyadenosine + 2 L-methionine + 2 oxidized [2Fe-2S]-[ferredoxin]. It participates in cofactor biosynthesis; biotin biosynthesis; biotin from 7,8-diaminononanoate: step 2/2. In terms of biological role, catalyzes the conversion of dethiobiotin (DTB) to biotin by the insertion of a sulfur atom into dethiobiotin via a radical-based mechanism. The polypeptide is Biotin synthase (Photobacterium profundum (strain SS9)).